A 317-amino-acid chain; its full sequence is WSCD family member AAEL009094 (317 aa).

Residues 8–28 (LFGLAGTILVYIGGILFLSFV) form a helical membrane-spanning segment. N-linked (GlcNAc...) asparagine glycans are attached at residues N150, N226, and N232.

It belongs to the WSCD family.

The protein resides in the membrane. This is WSCD family member AAEL009094 from Aedes aegypti (Yellowfever mosquito).